We begin with the raw amino-acid sequence, 275 residues long: Trypsin-4 (275 aa).

A signal peptide spans 1 to 18 (MSNKITILLAVLLAVVAC). The propeptide at 19-48 (AQAHASHQRRVPYPLPRFLPRPHHTVSNHR) is activation peptide. The region spanning 49-274 (IVGGFEIDVA…VRDWIRETCG (226 aa)) is the Peptidase S1 domain. Cysteine 74 and cysteine 90 are joined by a disulfide. Catalysis depends on charge relay system residues histidine 89 and aspartate 134. 2 cysteine pairs are disulfide-bonded: cysteine 199/cysteine 215 and cysteine 226/cysteine 250. Catalysis depends on serine 230, which acts as the Charge relay system.

This sequence belongs to the peptidase S1 family. As to expression, expressed in the midgut. Expression levels drop a few hours after blood feeding and pick up again 28 hours later.

The protein localises to the secreted. It catalyses the reaction Preferential cleavage: Arg-|-Xaa, Lys-|-Xaa.. Constitutive trypsin that is expressed 2 days after emergence, coinciding with host seeking behavior of the female. In Anopheles gambiae (African malaria mosquito), this protein is Trypsin-4 (TRYP4).